A 258-amino-acid chain; its full sequence is UPF0246 protein YaaA (258 aa).

Belongs to the UPF0246 family.

This is UPF0246 protein YaaA from Escherichia coli O157:H7.